Reading from the N-terminus, the 313-residue chain is 7,8-didemethyl-8-hydroxy-5-deazariboflavin synthase (313 aa).

Residues 4–235 (ITYSPAYTLV…AEITLQIPPN (232 aa)) form the Radical SAM core domain. Residues Cys18, Cys22, and Cys25 each coordinate [4Fe-4S] cluster.

This sequence belongs to the radical SAM superfamily. CofG family. As to quaternary structure, consists of two subunits, CofG and CofH. [4Fe-4S] cluster serves as cofactor.

It carries out the reaction 5-amino-5-(4-hydroxybenzyl)-6-(D-ribitylimino)-5,6-dihydrouracil + S-adenosyl-L-methionine = 7,8-didemethyl-8-hydroxy-5-deazariboflavin + 5'-deoxyadenosine + L-methionine + NH4(+) + H(+). It functions in the pathway cofactor biosynthesis; coenzyme F0 biosynthesis. Functionally, catalyzes the radical-mediated synthesis of 7,8-didemethyl-8-hydroxy-5-deazariboflavin from 5-amino-5-(4-hydroxybenzyl)-6-(D-ribitylimino)-5,6-dihydrouracil. This Synechocystis sp. (strain ATCC 27184 / PCC 6803 / Kazusa) protein is 7,8-didemethyl-8-hydroxy-5-deazariboflavin synthase.